Consider the following 80-residue polypeptide: Exodeoxyribonuclease 7 small subunit (80 aa).

The protein belongs to the XseB family. In terms of assembly, heterooligomer composed of large and small subunits.

The protein resides in the cytoplasm. The catalysed reaction is Exonucleolytic cleavage in either 5'- to 3'- or 3'- to 5'-direction to yield nucleoside 5'-phosphates.. Functionally, bidirectionally degrades single-stranded DNA into large acid-insoluble oligonucleotides, which are then degraded further into small acid-soluble oligonucleotides. The protein is Exodeoxyribonuclease 7 small subunit of Edwardsiella ictaluri (strain 93-146).